The sequence spans 76 residues: DNA-directed RNA polymerase subunit epsilon (76 aa).

Belongs to the RNA polymerase subunit epsilon family. RNAP is composed of a core of 2 alpha, a beta and a beta' subunit. The core is associated with a delta subunit, and at least one of epsilon or omega. When a sigma factor is associated with the core the holoenzyme is formed, which can initiate transcription.

The enzyme catalyses RNA(n) + a ribonucleoside 5'-triphosphate = RNA(n+1) + diphosphate. Its function is as follows. A non-essential component of RNA polymerase (RNAP). This is DNA-directed RNA polymerase subunit epsilon from Streptococcus mutans serotype c (strain ATCC 700610 / UA159).